The following is a 983-amino-acid chain: ABC transporter A family member 2 (983 aa).

The next 6 helical transmembrane spans lie at 33–53 (FLQL…QAAM), 221–241 (IVAL…FGFV), 279–299 (ILTA…QFDF), 305–325 (FPVV…LAFM), 339–359 (VGFF…SGFP), and 416–436 (VLTI…WFVL). The 246-residue stretch at 518–763 (VQIRGLAKTY…FGTGFIANIS (246 aa)) folds into the ABC transporter domain. Residue 564–571 (GPNGAGKT) coordinates ATP. The segment at 963–983 (RSGSTSSRRFSRSGSSRRFSS) is disordered.

It belongs to the ABC transporter superfamily. ABCA family. CPR flippase (TC 3.A.1.211) subfamily.

It is found in the membrane. In Arabidopsis thaliana (Mouse-ear cress), this protein is ABC transporter A family member 2 (ABCA2).